The chain runs to 233 residues: Lipoprotein-releasing system ATP-binding protein LolD (233 aa).

Residues 9–233 enclose the ABC transporter domain; that stretch reads LAINAVSKVF…GILSQSETHR (225 aa). An ATP-binding site is contributed by 45-52; that stretch reads GSSGSGKS.

It belongs to the ABC transporter superfamily. Lipoprotein translocase (TC 3.A.1.125) family. As to quaternary structure, the complex is composed of two ATP-binding proteins (LolD) and two transmembrane proteins (LolC and LolE).

It localises to the cell inner membrane. Functionally, part of the ABC transporter complex LolCDE involved in the translocation of mature outer membrane-directed lipoproteins, from the inner membrane to the periplasmic chaperone, LolA. Responsible for the formation of the LolA-lipoprotein complex in an ATP-dependent manner. The polypeptide is Lipoprotein-releasing system ATP-binding protein LolD (Shewanella denitrificans (strain OS217 / ATCC BAA-1090 / DSM 15013)).